The following is a 351-amino-acid chain: uncharacterized protein (351 aa).

Zn(2+) is bound by residues His23, His25, Lys151, His184, His212, and Asp270. Lys151 is modified (N6-carboxylysine).

It belongs to the metallo-dependent hydrolases superfamily. Phosphotriesterase family. The cofactor is Zn(2+).

This is an uncharacterized protein from Mycoplasma pneumoniae (strain ATCC 29342 / M129 / Subtype 1) (Mycoplasmoides pneumoniae).